We begin with the raw amino-acid sequence, 492 residues long: Bifunctional purine biosynthesis protein PurH (492 aa).

Residues 1–144 (MKKAILSVSN…KNFKHVTTIV (144 aa)) form the MGS-like domain.

This sequence belongs to the PurH family.

The catalysed reaction is (6R)-10-formyltetrahydrofolate + 5-amino-1-(5-phospho-beta-D-ribosyl)imidazole-4-carboxamide = 5-formamido-1-(5-phospho-D-ribosyl)imidazole-4-carboxamide + (6S)-5,6,7,8-tetrahydrofolate. The enzyme catalyses IMP + H2O = 5-formamido-1-(5-phospho-D-ribosyl)imidazole-4-carboxamide. Its pathway is purine metabolism; IMP biosynthesis via de novo pathway; 5-formamido-1-(5-phospho-D-ribosyl)imidazole-4-carboxamide from 5-amino-1-(5-phospho-D-ribosyl)imidazole-4-carboxamide (10-formyl THF route): step 1/1. It functions in the pathway purine metabolism; IMP biosynthesis via de novo pathway; IMP from 5-formamido-1-(5-phospho-D-ribosyl)imidazole-4-carboxamide: step 1/1. The polypeptide is Bifunctional purine biosynthesis protein PurH (Staphylococcus haemolyticus (strain JCSC1435)).